We begin with the raw amino-acid sequence, 138 residues long: Histone H2B (138 aa).

The span at 1–10 (MPPKAAEKKP) shows a compositional bias: basic and acidic residues. The segment at 1 to 47 (MPPKAAEKKPSTAGKAPAGKAPEKKEAGKKTTAAGGEKKKRSKTRKE) is disordered. N6-acetyllysine; alternate is present on residues Lys-8 and Lys-9. Glycyl lysine isopeptide (Lys-Gly) (interchain with G-Cter in SUMO); alternate cross-links involve residues Lys-8 and Lys-9. Over residues 11-20 (STAGKAPAGK) the composition is skewed to low complexity. An N6-acetyllysine modification is found at Lys-15. N6-acetyllysine; alternate is present on Lys-24. Lys-24 participates in a covalent cross-link: Glycyl lysine isopeptide (Lys-Gly) (interchain with G-Cter in SUMO); alternate. Lys-25 participates in a covalent cross-link: Glycyl lysine isopeptide (Lys-Gly) (interchain with G-Cter in SUMO). Lys-132 participates in a covalent cross-link: Glycyl lysine isopeptide (Lys-Gly) (interchain with G-Cter in ubiquitin).

Belongs to the histone H2B family. In terms of assembly, the nucleosome is a histone octamer containing two molecules each of H2A, H2B, H3 and H4 assembled in one H3-H4 heterotetramer and two H2A-H2B heterodimers. The octamer wraps approximately 147 bp of DNA. Monoubiquitinated to form H2BK123ub1. H2BK123ub1 gives a specific tag for epigenetic transcriptional activation and is also prerequisite for H3K4me and H3K79me formation. H2BK123ub1 also modulates the formation of double-strand breaks during meiosis and is a prerequisite for DNA-damage checkpoint activation. In terms of processing, acetylated by GCN5 to form H2BK11ac and H2BK16ac. H2BK16ac can also be formed by ESA1. Acetylation of N-terminal lysines and particularly formation of H2BK11acK16ac has a positive effect on transcription. Post-translationally, sumoylation to form H2BK6su or H2BK7su, and probably also H2BK16su or H2BK17su, occurs preferentially near the telomeres and represses gene transcription.

It localises to the nucleus. The protein localises to the chromosome. Its function is as follows. Core component of nucleosome. Nucleosomes wrap and compact DNA into chromatin, limiting DNA accessibility to the cellular machineries which require DNA as a template. Histones thereby play a central role in transcription regulation, DNA repair, DNA replication and chromosomal stability. DNA accessibility is regulated via a complex set of post-translational modifications of histones, also called histone code, and nucleosome remodeling. The protein is Histone H2B (HTB1) of Ajellomyces capsulatus (Darling's disease fungus).